Here is a 164-residue protein sequence, read N- to C-terminus: Ecotin (164 aa).

The signal sequence occupies residues 1 to 20 (MKMFVPAVVFAALASASAWA). C72 and C109 are disulfide-bonded.

The protein belongs to the protease inhibitor I11 (ecotin) family. Homodimer.

The protein resides in the periplasm. Functionally, general inhibitor of pancreatic serine proteases: inhibits chymotrypsin, trypsin, elastases, factor X, kallikrein as well as a variety of other proteases. The protein is Ecotin of Salmonella typhi.